Here is a 1502-residue protein sequence, read N- to C-terminus: Leucine-rich repeat-containing protein 9 (1502 aa).

LRR repeat units lie at residues 53 to 79, 97 to 119, 120 to 141, 142 to 164, 166 to 188, 224 to 247, 296 to 320, 699 to 721, 722 to 744, 746 to 764, 765 to 790, 792 to 814, 822 to 849, 894 to 916, 917 to 938, 939 to 960, 961 to 983, 985 to 1009, 1011 to 1030, 1031 to 1053, 1100 to 1123, 1124 to 1146, 1147 to 1170, 1209 to 1232, 1234 to 1255, 1256 to 1278, 1280 to 1301, 1302 to 1325, and 1327 to 1351; these read FPNL…HFLK, CADL…LENL, LKLE…LDMM, QNLK…LDPN, QLER…NLAR, LQRL…TVVK, EHEL…KFHE, YSQI…ISRL, NGLR…SYLT, LEYL…GFKG, LGKL…ILRK, AIQL…VLKD, LTHL…RITQ, YTKI…LEKL, VNLR…LEHC, VNLE…LSKL, TKLR…VIES, SHLH…GYKL, ELYL…SLKG, LNNL…NYRL, FTEL…PADH, FRNV…LIFL, PNIK…KSQS, MQSL…QLGR, RNLK…LENL, QFLR…SFAK, NSLV…LPPL, LKLR…KLEV, and PALV…LLVV. A disordered region spans residues 317 to 342; sequence KFHENNCDTEESNSQQSSERRKNNSD. Over residues 1479–1496 the composition is skewed to polar residues; sequence TQQSGQARSQQKHPFNQE. Residues 1479-1502 form a disordered region; sequence TQQSGQARSQQKHPFNQENEGRCV.

This is Leucine-rich repeat-containing protein 9 (lrrc9) from Xenopus tropicalis (Western clawed frog).